The chain runs to 432 residues: MDPLNATGMDAFTAIHLNASWSADSGYSLAAIASIAALVSFLILFTVVGNILVVIAVLTSRALKAPQNLFLVSLATADILVATLVMPFSLANELMGYWYFGKVWCGIYLALDVLFCTSSIVHLCAISLDRYWSVTQAVEYNLKRTPKRVKCIIVIVWLISAFISSPPLLSIDSNNYISSQPQCMLNDDTWYILSSSMASFFAPCLIMILVYIRIYQVAKTRTRSMSGKEPRPDGVTQTENGLNKANSPCHGDRENGHCQCPPTPSQRTVTIGQQTDDADMDESFSSEGKGHKPQRQDSQRAKRPGLKKSSISKQSARISRVSNKSVDLFASRRKRRRSSIAEKKVSQAREKRFTFVLAVVMGVFVVCWFPFFFSYSLHAVCRDYCKIPDTLFKFFWIGYCNSSLNPAIYTIFNRDFRRAFQKILCKSWKKSF.

Topologically, residues 1–32 (MDPLNATGMDAFTAIHLNASWSADSGYSLAAI) are extracellular. 2 N-linked (GlcNAc...) asparagine glycosylation sites follow: Asn-5 and Asn-18. Residues 33–57 (ASIAALVSFLILFTVVGNILVVIAV) form a helical membrane-spanning segment. Over 58-69 (LTSRALKAPQNL) the chain is Cytoplasmic. The chain crosses the membrane as a helical span at residues 70 to 95 (FLVSLATADILVATLVMPFSLANELM). Topologically, residues 96–105 (GYWYFGKVWC) are extracellular. Cys-105 and Cys-183 are oxidised to a cystine. Residues 106–128 (GIYLALDVLFCTSSIVHLCAISL) traverse the membrane as a helical segment. At 129-149 (DRYWSVTQAVEYNLKRTPKRV) the chain is on the cytoplasmic side. A helical transmembrane segment spans residues 150–172 (KCIIVIVWLISAFISSPPLLSID). Over 173–188 (SNNYISSQPQCMLNDD) the chain is Extracellular. A helical transmembrane segment spans residues 189–212 (TWYILSSSMASFFAPCLIMILVYI). Over 213 to 356 (RIYQVAKTRT…QAREKRFTFV (144 aa)) the chain is Cytoplasmic. The interval 222 to 319 (TRSMSGKEPR…SISKQSARIS (98 aa)) is disordered. Polar residues-rich tracts occupy residues 235–246 (VTQTENGLNKAN) and 265–275 (SQRTVTIGQQT). The span at 288-300 (GKGHKPQRQDSQR) shows a compositional bias: basic and acidic residues. Positions 309-319 (SSISKQSARIS) are enriched in polar residues. Residues 357-380 (LAVVMGVFVVCWFPFFFSYSLHAV) traverse the membrane as a helical segment. Over 381–393 (CRDYCKIPDTLFK) the chain is Extracellular. The helical transmembrane segment at 394-413 (FFWIGYCNSSLNPAIYTIFN) threads the bilayer. At 414–432 (RDFRRAFQKILCKSWKKSF) the chain is on the cytoplasmic side.

The protein belongs to the G-protein coupled receptor 1 family.

It is found in the cell membrane. Alpha-2 adrenergic receptors mediate the catecholamine-induced inhibition of adenylate cyclase through the action of G proteins. The polypeptide is Alpha-2 adrenergic receptor (Labrus ossifagus (Cuckoo wrasse)).